The sequence spans 66 residues: Antimicrobial peptide Eval967 (66 aa).

A signal peptide spans 1–22; that stretch reads MKFSALLPVFFLLLAVIDYCQA. Leu36 carries the post-translational modification Leucine amide. The propeptide occupies 37–66; it reads GKRDVKTQKYVDIKRRDLDLDDMLSKLFED.

It belongs to the non-disulfide-bridged peptide (NDBP) superfamily. Short antimicrobial peptide (group 4) family. In terms of tissue distribution, expressed by the venom gland.

It localises to the secreted. Its function is as follows. Probable antimicrobial peptide. Has no inhibitory activity against herpes simplex virus type 1 (HSV-1). The polypeptide is Antimicrobial peptide Eval967 (Euscorpiops validus (Scorpion)).